The primary structure comprises 485 residues: GTPase Obg (485 aa).

An Obg domain is found at 2–159 (PRFVDRVVIH…RDLTLELKTV (158 aa)). The OBG-type G domain occupies 160–341 (ADVGLIGFPS…LIFALWEMVK (182 aa)). GTP-binding positions include 166–173 (GFPSAGKS), 191–195 (FTTLV), 212–215 (DVPG), 292–295 (NKID), and 322–324 (STV). Residues S173 and T193 each contribute to the Mg(2+) site. Residues 359 to 437 (PIPVDESGFT…IGDVTFDWEP (79 aa)) form the OCT domain. Residues 450–485 (RGTDIRLEQTDRVGAAERKAARRERRQPGESGGEDS) form a disordered region. The segment covering 452–468 (TDIRLEQTDRVGAAERK) has biased composition (basic and acidic residues).

The protein belongs to the TRAFAC class OBG-HflX-like GTPase superfamily. OBG GTPase family. As to quaternary structure, monomer. The cofactor is Mg(2+).

Its subcellular location is the cytoplasm. An essential GTPase which binds GTP, GDP and possibly (p)ppGpp with moderate affinity, with high nucleotide exchange rates and a fairly low GTP hydrolysis rate. Plays a role in control of the cell cycle, stress response, ribosome biogenesis and in those bacteria that undergo differentiation, in morphogenesis control. The chain is GTPase Obg from Mycolicibacterium smegmatis (strain ATCC 700084 / mc(2)155) (Mycobacterium smegmatis).